A 264-amino-acid chain; its full sequence is Indole-3-glycerol phosphate synthase (264 aa).

It belongs to the TrpC family.

The catalysed reaction is 1-(2-carboxyphenylamino)-1-deoxy-D-ribulose 5-phosphate + H(+) = (1S,2R)-1-C-(indol-3-yl)glycerol 3-phosphate + CO2 + H2O. It participates in amino-acid biosynthesis; L-tryptophan biosynthesis; L-tryptophan from chorismate: step 4/5. The protein is Indole-3-glycerol phosphate synthase of Lactococcus lactis subsp. cremoris (strain MG1363).